The primary structure comprises 240 residues: Octanoyltransferase (240 aa).

In terms of domain architecture, BPL/LPL catalytic spans 49–233 (GEAPELVWLL…AFESVFGATR (185 aa)). Substrate contacts are provided by residues 87-94 (RGGQVTYH), 162-164 (AIG), and 175-177 (GIA). The active-site Acyl-thioester intermediate is Cys193.

This sequence belongs to the LipB family.

The protein localises to the cytoplasm. The catalysed reaction is octanoyl-[ACP] + L-lysyl-[protein] = N(6)-octanoyl-L-lysyl-[protein] + holo-[ACP] + H(+). It participates in protein modification; protein lipoylation via endogenous pathway; protein N(6)-(lipoyl)lysine from octanoyl-[acyl-carrier-protein]: step 1/2. Its function is as follows. Catalyzes the transfer of endogenously produced octanoic acid from octanoyl-acyl-carrier-protein onto the lipoyl domains of lipoate-dependent enzymes. Lipoyl-ACP can also act as a substrate although octanoyl-ACP is likely to be the physiological substrate. The protein is Octanoyltransferase of Bradyrhizobium sp. (strain BTAi1 / ATCC BAA-1182).